Consider the following 308-residue polypeptide: Ribosomal RNA small subunit methyltransferase H (308 aa).

S-adenosyl-L-methionine-binding positions include 34–36, aspartate 54, phenylalanine 80, aspartate 101, and glutamine 108; that span reads GGH.

Belongs to the methyltransferase superfamily. RsmH family.

The protein resides in the cytoplasm. It carries out the reaction cytidine(1402) in 16S rRNA + S-adenosyl-L-methionine = N(4)-methylcytidine(1402) in 16S rRNA + S-adenosyl-L-homocysteine + H(+). Its function is as follows. Specifically methylates the N4 position of cytidine in position 1402 (C1402) of 16S rRNA. The protein is Ribosomal RNA small subunit methyltransferase H of Ureaplasma parvum serovar 3 (strain ATCC 27815 / 27 / NCTC 11736).